The chain runs to 215 residues: Thymidylate kinase (215 aa).

ATP is bound at residue 13–20 (GLEGAGKS).

This sequence belongs to the thymidylate kinase family.

The catalysed reaction is dTMP + ATP = dTDP + ADP. Functionally, phosphorylation of dTMP to form dTDP in both de novo and salvage pathways of dTTP synthesis. This is Thymidylate kinase from Shewanella frigidimarina (strain NCIMB 400).